Consider the following 449-residue polypeptide: Required for meiotic nuclear division protein 1 homolog (449 aa).

A mitochondrion-targeting transit peptide spans 1–12 (MPATLLRAVARS).

Belongs to the RMD1/sif2 family. In terms of assembly, homooligomer.

The protein resides in the mitochondrion. Its function is as follows. Required for mitochondrial translation, possibly by coordinating the assembly or maintenance of the mitochondrial ribosome. The sequence is that of Required for meiotic nuclear division protein 1 homolog (RMND1) from Homo sapiens (Human).